Consider the following 1231-residue polypeptide: Multifunctional 2-oxoglutarate metabolism enzyme (1231 aa).

The interval 1 to 41 (MANISSPFGQNEWLVEAMYRKFRDDPSSVDPSWHEFLVDYS) is 2-oxoglutarate dehydrogenase E1, N-terminal part. Positions 24–37 (DDPSSVDPSWHEFL) are enriched in basic and acidic residues. The interval 24–56 (DDPSSVDPSWHEFLVDYSPEPTSQPAAEPTRVT) is disordered. Residues 42–88 (PEPTSQPAAEPTRVTSPLVAERAAAAAPQAPPKPADTAAAGNGVVAA) are linker. Residues 89–337 (LAAKTAVPPP…LRTIHELLLS (249 aa)) are succinyltransferase E2. H316 acts as the Proton acceptor; for succinyltransferase activity in catalysis. Positions 338–1231 (DGFWDEVFRE…QQEILDEAFG (894 aa)) are 2-oxoglutarate dehydrogenase E1, C-terminal part. R542 is a thiamine diphosphate binding site. 2-oxoglutarate is bound by residues H581 and S606. Thiamine diphosphate is bound by residues S606, L608, D649, A650, A651, and N682. Residue D649 coordinates Mg(2+). Mg(2+) is bound by residues N682 and I684. A coiled-coil region spans residues 787-817 (DISMKEAEDALRDYQGQLERVFNEVRELEKH). Residue H1024 coordinates 2-oxoglutarate. Acetyl-CoA contacts are provided by T1042, R1058, K1093, S1096, Q1146, R1153, and R1154.

This sequence belongs to the 2-oxoacid dehydrogenase family. Kgd subfamily. In terms of assembly, homodimer. The 2-oxoglutarate dehydrogenase (ODH) complex contains multiple copies of three enzymatic components: 2-oxoglutarate dehydrogenase (E1), dihydrolipoamide succinyltransferase (E2) and lipoamide dehydrogenase (E3). The cofactor is Mg(2+). Thiamine diphosphate is required as a cofactor.

It catalyses the reaction glyoxylate + 2-oxoglutarate + H(+) = 2-hydroxy-3-oxoadipate + CO2. The enzyme catalyses 2-oxoglutarate + H(+) = succinate semialdehyde + CO2. It carries out the reaction N(6)-[(R)-lipoyl]-L-lysyl-[protein] + 2-oxoglutarate + H(+) = N(6)-[(R)-S(8)-succinyldihydrolipoyl]-L-lysyl-[protein] + CO2. The catalysed reaction is N(6)-[(R)-dihydrolipoyl]-L-lysyl-[protein] + succinyl-CoA = N(6)-[(R)-S(8)-succinyldihydrolipoyl]-L-lysyl-[protein] + CoA. The protein operates within carbohydrate metabolism; tricarboxylic acid cycle; succinate from 2-oxoglutarate (transferase route): step 1/2. It functions in the pathway carbohydrate metabolism; tricarboxylic acid cycle; succinyl-CoA from 2-oxoglutarate (dehydrogenase route): step 1/1. With respect to regulation, alpha-ketoglutarate dehydrogenase and decarboxylase activities are inhibited by unphosphorylated GarA, and allosterically activated by acetyl-CoA, the main substrate of the TCA cycle. In terms of biological role, shows three enzymatic activities that share a first common step, the attack of thiamine-PP on 2-oxoglutarate (alpha-ketoglutarate, KG), leading to the formation of an enamine-thiamine-PP intermediate upon decarboxylation. Thus, displays KGD activity, catalyzing the decarboxylation from five-carbon 2-oxoglutarate to four-carbon succinate semialdehyde (SSA). Also catalyzes C-C bond formation between the activated aldehyde formed after decarboxylation of alpha-ketoglutarate and the carbonyl of glyoxylate (GLX), to yield 2-hydroxy-3-oxoadipate (HOA), which spontaneously decarboxylates to form 5-hydroxylevulinate (HLA). And is also a component of the 2-oxoglutarate dehydrogenase (ODH) complex, that catalyzes the overall conversion of 2-oxoglutarate to succinyl-CoA and CO(2). The KG decarboxylase and KG dehydrogenase reactions provide two alternative, tightly regulated, pathways connecting the oxidative and reductive branches of the TCA cycle. The polypeptide is Multifunctional 2-oxoglutarate metabolism enzyme (kgd) (Mycobacterium bovis (strain ATCC BAA-935 / AF2122/97)).